A 291-amino-acid chain; its full sequence is Bifunctional protein FolD (291 aa).

Residues 168 to 170 (GRG), threonine 195, and valine 236 each bind NADP(+).

Belongs to the tetrahydrofolate dehydrogenase/cyclohydrolase family. In terms of assembly, homodimer.

The enzyme catalyses (6R)-5,10-methylene-5,6,7,8-tetrahydrofolate + NADP(+) = (6R)-5,10-methenyltetrahydrofolate + NADPH. It catalyses the reaction (6R)-5,10-methenyltetrahydrofolate + H2O = (6R)-10-formyltetrahydrofolate + H(+). Its pathway is one-carbon metabolism; tetrahydrofolate interconversion. Catalyzes the oxidation of 5,10-methylenetetrahydrofolate to 5,10-methenyltetrahydrofolate and then the hydrolysis of 5,10-methenyltetrahydrofolate to 10-formyltetrahydrofolate. The chain is Bifunctional protein FolD from Bifidobacterium adolescentis (strain ATCC 15703 / DSM 20083 / NCTC 11814 / E194a).